An 87-amino-acid polypeptide reads, in one-letter code: MVDEITNETAQTVAAGQLRAFIERIERLEEEKQTISDDIKDVYAEMKGNGFDVKAVRAIVRLRKKDQAERQEEEAILDLYKAALGMV.

Belongs to the UPF0335 family.

In Chelativorans sp. (strain BNC1), this protein is UPF0335 protein Meso_3367.